Reading from the N-terminus, the 123-residue chain is MLPTENRLRRREDFATAVRRGRRAGRPLLVVHLRSGDTDPHVTGETVPPPRAGFVVSKAVGGAVVRTAVKRRLRHLVRDRLAQLPPGSLVVVRALPGAGDADHAQLARDLDAALQRLLGGGAR.

Belongs to the RnpA family. As to quaternary structure, consists of a catalytic RNA component (M1 or rnpB) and a protein subunit.

The enzyme catalyses Endonucleolytic cleavage of RNA, removing 5'-extranucleotides from tRNA precursor.. Functionally, RNaseP catalyzes the removal of the 5'-leader sequence from pre-tRNA to produce the mature 5'-terminus. It can also cleave other RNA substrates such as 4.5S RNA. The protein component plays an auxiliary but essential role in vivo by binding to the 5'-leader sequence and broadening the substrate specificity of the ribozyme. The polypeptide is Ribonuclease P protein component (Streptomyces griseus subsp. griseus (strain JCM 4626 / CBS 651.72 / NBRC 13350 / KCC S-0626 / ISP 5235)).